We begin with the raw amino-acid sequence, 1353 residues long: Inhibitor of Bruton tyrosine kinase (1353 aa).

ANK repeat units lie at residues 51 to 80 and 85 to 114; these read FGRNALHLVSSCGKKGVLDWLIQKGVDLLV and SGWTALHRSIFYGHIDCVWSLLKHGVSLYI. RCC1 repeat units follow at residues 141–194, 195–246, and 248–301; these read PTDV…FLSQ, KGQV…VLTE, and GCVY…LWTR. BTB domains are found at residues 564-644 and 768-836; these read HDVT…DFLT and CDVT…VVIK. Residues 806 to 835 form an ANK 3 repeat; that stretch reads SSCAALEMPIHSDILKVILDYLYTDEAVVI. The interval 970 to 1001 is disordered; sequence HSETMFKKAKTKAKKKPRKRSDSSGGYNLSDI. Over residues 976 to 988 the composition is skewed to basic residues; that stretch reads KKAKTKAKKKPRK. Position 990 is a phosphoserine (S990). Residues 992-1001 show a composition bias toward polar residues; it reads SSGGYNLSDI. S1004, S1030, S1033, S1039, S1045, S1054, S1083, S1111, S1113, and S1116 each carry phosphoserine. The segment at 1134–1155 is disordered; it reads KCGATPKSHLGKTVSHGVKLSQ.

In terms of assembly, interacts with the PH domain of BTK. Isoform 2 does not interact with BTK. In terms of tissue distribution, expressed in DeFew, HEK293T, HeLa and in Jurkat, MC3 and NB4 lymphoid cells (at protein level). Isoform 1 is the predominant isoform expressed in all examined tissues and cell lines. Highly expressed in hemopoietic tissues (fetal liver, spleen, lymph node, thymus, peripheral blood leukocytes and bone marrow). Weakly or not expressed in other tissues.

The protein localises to the cytoplasm. The protein resides in the membrane. It localises to the nucleus. In terms of biological role, acts as an inhibitor of BTK tyrosine kinase activity, thereby playing a role in B-cell development. Down-regulates BTK kinase activity, leading to interference with BTK-mediated calcium mobilization and NF-kappa-B-driven transcription. The protein is Inhibitor of Bruton tyrosine kinase (IBTK) of Homo sapiens (Human).